The sequence spans 259 residues: Imidazole glycerol phosphate synthase subunit HisF (259 aa).

Catalysis depends on residues D11 and D130.

Belongs to the HisA/HisF family. In terms of assembly, heterodimer of HisH and HisF.

It is found in the cytoplasm. The catalysed reaction is 5-[(5-phospho-1-deoxy-D-ribulos-1-ylimino)methylamino]-1-(5-phospho-beta-D-ribosyl)imidazole-4-carboxamide + L-glutamine = D-erythro-1-(imidazol-4-yl)glycerol 3-phosphate + 5-amino-1-(5-phospho-beta-D-ribosyl)imidazole-4-carboxamide + L-glutamate + H(+). Its pathway is amino-acid biosynthesis; L-histidine biosynthesis; L-histidine from 5-phospho-alpha-D-ribose 1-diphosphate: step 5/9. IGPS catalyzes the conversion of PRFAR and glutamine to IGP, AICAR and glutamate. The HisF subunit catalyzes the cyclization activity that produces IGP and AICAR from PRFAR using the ammonia provided by the HisH subunit. This chain is Imidazole glycerol phosphate synthase subunit HisF, found in Nitratidesulfovibrio vulgaris (strain DP4) (Desulfovibrio vulgaris).